Consider the following 355-residue polypeptide: Peptide chain release factor 1 (355 aa).

Gln230 is modified (N5-methylglutamine).

The protein belongs to the prokaryotic/mitochondrial release factor family. Methylated by PrmC. Methylation increases the termination efficiency of RF1.

It localises to the cytoplasm. Functionally, peptide chain release factor 1 directs the termination of translation in response to the peptide chain termination codons UAG and UAA. The polypeptide is Peptide chain release factor 1 (Geotalea uraniireducens (strain Rf4) (Geobacter uraniireducens)).